Consider the following 192-residue polypeptide: dITP/XTP pyrophosphatase (192 aa).

Substrate is bound at residue 12–17 (TNNENK). Mg(2+) contacts are provided by glutamate 41 and aspartate 70. The Proton acceptor role is filled by aspartate 70. Substrate contacts are provided by residues serine 71, 145 to 148 (FGFD), lysine 168, and 173 to 174 (HR).

Belongs to the HAM1 NTPase family. Homodimer. It depends on Mg(2+) as a cofactor.

The enzyme catalyses XTP + H2O = XMP + diphosphate + H(+). It carries out the reaction dITP + H2O = dIMP + diphosphate + H(+). The catalysed reaction is ITP + H2O = IMP + diphosphate + H(+). Functionally, pyrophosphatase that catalyzes the hydrolysis of nucleoside triphosphates to their monophosphate derivatives, with a high preference for the non-canonical purine nucleotides XTP (xanthosine triphosphate), dITP (deoxyinosine triphosphate) and ITP. Seems to function as a house-cleaning enzyme that removes non-canonical purine nucleotides from the nucleotide pool, thus preventing their incorporation into DNA/RNA and avoiding chromosomal lesions. The protein is dITP/XTP pyrophosphatase of Saccharolobus solfataricus (strain ATCC 35092 / DSM 1617 / JCM 11322 / P2) (Sulfolobus solfataricus).